The following is a 284-amino-acid chain: RNase adapter protein RapZ (284 aa).

8 to 15 (GRSGSGKS) is a binding site for ATP. 56 to 59 (DVRN) provides a ligand contact to GTP. Positions 266–284 (RSRGKNVQSRHRTLEKRKP) are RNA-binding.

The protein belongs to the RapZ-like family. RapZ subfamily. Homotrimer.

Functionally, modulates the synthesis of GlmS, by affecting the processing and stability of the regulatory small RNA GlmZ. When glucosamine-6-phosphate (GlcN6P) concentrations are high in the cell, RapZ binds GlmZ and targets it to cleavage by RNase E. Consequently, GlmZ is inactivated and unable to activate GlmS synthesis. Under low GlcN6P concentrations, RapZ is sequestered and inactivated by an other regulatory small RNA, GlmY, preventing GlmZ degradation and leading to synthesis of GlmS. The sequence is that of RNase adapter protein RapZ from Escherichia coli O1:K1 / APEC.